The primary structure comprises 638 residues: 3D-(3,5/4)-trihydroxycyclohexane-1,2-dione hydrolase (638 aa).

A thiamine diphosphate-binding site is contributed by Glu67. The thiamine pyrophosphate binding stretch occupies residues 442 to 523; sequence SLPGDLQRLW…INIMLFDNSG (82 aa). The Mg(2+) site is built by Asp494 and Asn521.

This sequence belongs to the TPP enzyme family. Requires Mg(2+) as cofactor. Thiamine diphosphate serves as cofactor.

The catalysed reaction is 3D-3,5/4-trihydroxycyclohexane-1,2-dione + H2O = 5-deoxy-D-glucuronate + H(+). The protein operates within polyol metabolism; myo-inositol degradation into acetyl-CoA; acetyl-CoA from myo-inositol: step 3/7. Its function is as follows. Involved in the cleavage of the C1-C2 bond of 3D-(3,5/4)-trihydroxycyclohexane-1,2-dione (THcHDO) to yield 5-deoxy-glucuronate (5DG). This Listeria monocytogenes serotype 4b (strain F2365) protein is 3D-(3,5/4)-trihydroxycyclohexane-1,2-dione hydrolase.